A 195-amino-acid polypeptide reads, in one-letter code: Interferon tau (195 aa).

The signal sequence occupies residues 1–23 (MAFMLSLLMALVLVSYGLGGSLG). 2 cysteine pairs are disulfide-bonded: cysteine 52-cysteine 162 and cysteine 87-cysteine 109.

Belongs to the alpha/beta interferon family. IFN-alphaII subfamily.

Its subcellular location is the secreted. Its function is as follows. Paracrine hormone primarily responsible for maternal recognition of pregnancy. Interacts with endometrial receptors, probably type I interferon receptors, and blocks estrogen receptor expression, preventing the estrogen-induced increase in oxytocin receptor expression in the endometrium. This results in the suppression of the pulsatile endometrial release of the luteolytic hormone prostaglandin F2-alpha, hindering the regression of the corpus luteum (luteolysis) and therefore a return to ovarian cyclicity. This, and a possible direct effect of IFN-tau on prostaglandin synthesis, leads in turn to continued ovarian progesterone secretion, which stimulates the secretion by the endometrium of the nutrients required for the growth of the conceptus. In summary, displays particularly high antiviral and antiproliferative potency concurrently with particular weak cytotoxicity, high antiluteolytic activity and immunomodulatory properties. In contrast with other IFNs, IFN-tau is not virally inducible. In Giraffa camelopardalis (Giraffe), this protein is Interferon tau (IFNT).